We begin with the raw amino-acid sequence, 682 residues long: Elongation factor G (682 aa).

The tr-type G domain maps to 8–282 (QKFRNFGIMA…AVVDYLPSPV (275 aa)). GTP contacts are provided by residues 17 to 24 (AHIDAGKT), 81 to 85 (DTPGH), and 135 to 138 (NKMD).

Belongs to the TRAFAC class translation factor GTPase superfamily. Classic translation factor GTPase family. EF-G/EF-2 subfamily.

The protein localises to the cytoplasm. In terms of biological role, catalyzes the GTP-dependent ribosomal translocation step during translation elongation. During this step, the ribosome changes from the pre-translocational (PRE) to the post-translocational (POST) state as the newly formed A-site-bound peptidyl-tRNA and P-site-bound deacylated tRNA move to the P and E sites, respectively. Catalyzes the coordinated movement of the two tRNA molecules, the mRNA and conformational changes in the ribosome. The sequence is that of Elongation factor G from Malacoplasma penetrans (strain HF-2) (Mycoplasma penetrans).